The primary structure comprises 325 residues: Phospho-N-acetylmuramoyl-pentapeptide-transferase (325 aa).

10 consecutive transmembrane segments (helical) span residues 9-29 (ALLVSFFVALGGGRVLIPWLL), 53-73 (TMGGIIFLLSLVVTVVVFQAF), 77-97 (TLLLLITTLLFGLLGFLDDYL), 112-132 (KLLGQVIFSLVLTFGAVAFLG), 154-174 (LGNVFFFAATIFIMVGFANAV), 182-202 (GLCSSVTLIVMSFFAMTSLAL), 204-224 (EKGLFIFALALMGGLVGFLVY), 231-251 (VFMGDTGSLALGAAVAGFAVL), 257-277 (FLLLVGLIYVVETLSVIIQVI), and 305-325 (KIVLVFSLVTLIMVLISGYGL).

Belongs to the glycosyltransferase 4 family. MraY subfamily. Mg(2+) is required as a cofactor.

The protein localises to the cell membrane. The catalysed reaction is UDP-N-acetyl-alpha-D-muramoyl-L-alanyl-gamma-D-glutamyl-meso-2,6-diaminopimeloyl-D-alanyl-D-alanine + di-trans,octa-cis-undecaprenyl phosphate = di-trans,octa-cis-undecaprenyl diphospho-N-acetyl-alpha-D-muramoyl-L-alanyl-D-glutamyl-meso-2,6-diaminopimeloyl-D-alanyl-D-alanine + UMP. It functions in the pathway cell wall biogenesis; peptidoglycan biosynthesis. In terms of biological role, catalyzes the initial step of the lipid cycle reactions in the biosynthesis of the cell wall peptidoglycan: transfers peptidoglycan precursor phospho-MurNAc-pentapeptide from UDP-MurNAc-pentapeptide onto the lipid carrier undecaprenyl phosphate, yielding undecaprenyl-pyrophosphoryl-MurNAc-pentapeptide, known as lipid I. The protein is Phospho-N-acetylmuramoyl-pentapeptide-transferase of Carboxydothermus hydrogenoformans (strain ATCC BAA-161 / DSM 6008 / Z-2901).